A 651-amino-acid polypeptide reads, in one-letter code: Probable inactive purple acid phosphatase 9 (651 aa).

The first 20 residues, 1 to 20 (MIAAVYTLFFFFLLISSVYS), serve as a signal peptide directing secretion. N-linked (GlcNAc...) asparagine glycans are attached at residues Asn32, Asn96, and Asn202. Residues Asp305 and Tyr308 each contribute to the Fe cation site. A Zn(2+)-binding site is contributed by Asp305. Zn(2+) is bound at residue Asn338. Asn338 serves as a coordination point for substrate. N-linked (GlcNAc...) asparagine glycans are attached at residues Asn378 and Asn432. His444 is a Zn(2+) binding site. N-linked (GlcNAc...) asparagine glycosylation occurs at Asn475. Residue His483 coordinates Zn(2+). 483–485 (HVH) serves as a coordination point for substrate. His485 serves as a coordination point for Fe cation. 2 N-linked (GlcNAc...) asparagine glycosylation sites follow: Asn495 and Asn640.

This sequence belongs to the metallophosphoesterase superfamily. Purple acid phosphatase family. In terms of assembly, homodimer. It depends on Fe cation as a cofactor. The cofactor is Zn(2+). In terms of tissue distribution, expressed in roots, stems, leaves, flowers and siliques.

It localises to the secreted. The sequence is that of Probable inactive purple acid phosphatase 9 (PAP9) from Arabidopsis thaliana (Mouse-ear cress).